The sequence spans 444 residues: Probable D-serine dehydratase (444 aa).

N6-(pyridoxal phosphate)lysine is present on Lys118.

Belongs to the serine/threonine dehydratase family. DsdA subfamily. The cofactor is pyridoxal 5'-phosphate.

The catalysed reaction is D-serine = pyruvate + NH4(+). The protein is Probable D-serine dehydratase of Desulfitobacterium hafniense (strain Y51).